A 110-amino-acid polypeptide reads, in one-letter code: Nucleoid-associated protein CbuK_1603 (110 aa).

Belongs to the YbaB/EbfC family. As to quaternary structure, homodimer.

Its subcellular location is the cytoplasm. The protein localises to the nucleoid. In terms of biological role, binds to DNA and alters its conformation. May be involved in regulation of gene expression, nucleoid organization and DNA protection. This is Nucleoid-associated protein CbuK_1603 from Coxiella burnetii (strain CbuK_Q154) (Coxiella burnetii (strain Q154)).